The sequence spans 223 residues: Peptidyl-tRNA hydrolase (223 aa).

TRNA is bound at residue Y16. The active-site Proton acceptor is H21. TRNA is bound by residues F67, N69, and N113.

The protein belongs to the PTH family. As to quaternary structure, monomer.

It is found in the cytoplasm. The catalysed reaction is an N-acyl-L-alpha-aminoacyl-tRNA + H2O = an N-acyl-L-amino acid + a tRNA + H(+). Functionally, hydrolyzes ribosome-free peptidyl-tRNAs (with 1 or more amino acids incorporated), which drop off the ribosome during protein synthesis, or as a result of ribosome stalling. Its function is as follows. Catalyzes the release of premature peptidyl moieties from peptidyl-tRNA molecules trapped in stalled 50S ribosomal subunits, and thus maintains levels of free tRNAs and 50S ribosomes. The polypeptide is Peptidyl-tRNA hydrolase (Helicobacter hepaticus (strain ATCC 51449 / 3B1)).